We begin with the raw amino-acid sequence, 332 residues long: MEKLYDSYDRLHDYVRLSITDRCNLRCVYCMPKEGLPFFPTDRVLSQDEIVQLIENFAAMGVSKVRITGGEPLLRTDVVEIVRRIKAVDGINDVSITTNGLFLAKLAKPLKEAGLDRLNISLDTFKADRYKKITRGGNIQQVLDGIAVASKLHFKKIKLNIVLIKGQNDDEVLDFLHYTKDHDVNARFIEFMPIGNSLKTWQKEYVGLKNVFDTCKDNGLAYHPIVLRGNGPSDNYQIEGYEGSFGLIHPISSKFCENCNRLRITADGYVKACLYWNEEIDIRSAIGDPVAFRKLIQKALDNKPLNHEMAMSETDRIIDKAPTWRHMSQIGG.

The region spanning S7–A221 is the Radical SAM core domain. Position 16 (R16) interacts with GTP. [4Fe-4S] cluster contacts are provided by C23 and C27. S-adenosyl-L-methionine is bound at residue Y29. C30 lines the [4Fe-4S] cluster pocket. A GTP-binding site is contributed by R66. G70 contributes to the S-adenosyl-L-methionine binding site. T97 contributes to the GTP binding site. S121 is a binding site for S-adenosyl-L-methionine. K158 is a GTP binding site. M192 contributes to the S-adenosyl-L-methionine binding site. C256 and C259 together coordinate [4Fe-4S] cluster. Position 261–263 (R261–R263) interacts with GTP. A [4Fe-4S] cluster-binding site is contributed by C273.

Belongs to the radical SAM superfamily. MoaA family. As to quaternary structure, monomer and homodimer. [4Fe-4S] cluster serves as cofactor.

It carries out the reaction GTP + AH2 + S-adenosyl-L-methionine = (8S)-3',8-cyclo-7,8-dihydroguanosine 5'-triphosphate + 5'-deoxyadenosine + L-methionine + A + H(+). It participates in cofactor biosynthesis; molybdopterin biosynthesis. Functionally, catalyzes the cyclization of GTP to (8S)-3',8-cyclo-7,8-dihydroguanosine 5'-triphosphate. This Lactiplantibacillus plantarum (strain ATCC BAA-793 / NCIMB 8826 / WCFS1) (Lactobacillus plantarum) protein is GTP 3',8-cyclase.